We begin with the raw amino-acid sequence, 129 residues long: Phosphoribosyl-AMP cyclohydrolase (129 aa).

Mg(2+) is bound at residue Asp85. Cys86 contacts Zn(2+). Asp87 and Asp89 together coordinate Mg(2+). Positions 102 and 109 each coordinate Zn(2+).

The protein belongs to the PRA-CH family. In terms of assembly, homodimer. The cofactor is Mg(2+). Zn(2+) serves as cofactor.

Its subcellular location is the cytoplasm. It carries out the reaction 1-(5-phospho-beta-D-ribosyl)-5'-AMP + H2O = 1-(5-phospho-beta-D-ribosyl)-5-[(5-phospho-beta-D-ribosylamino)methylideneamino]imidazole-4-carboxamide. It participates in amino-acid biosynthesis; L-histidine biosynthesis; L-histidine from 5-phospho-alpha-D-ribose 1-diphosphate: step 3/9. In terms of biological role, catalyzes the hydrolysis of the adenine ring of phosphoribosyl-AMP. In Methanococcus maripaludis (strain C6 / ATCC BAA-1332), this protein is Phosphoribosyl-AMP cyclohydrolase.